A 252-amino-acid chain; its full sequence is Protein lin-28 homolog B (252 aa).

The tract at residues 1 to 30 (MAEGGAARGTREEQGKLPEQEEEEEEDPQV) is disordered. Residues 9–19 (GTREEQGKLPE) show a composition bias toward basic and acidic residues. One can recognise a CSD domain in the interval 32 to 105 (LGSGHCKWFN…GFESLRVTGP (74 aa)). 2 CCHC-type zinc fingers span residues 130–147 (DRCY…ECNL) and 152–169 (KKCH…NCPH). Zn(2+) contacts are provided by C132, C135, H140, C145, C154, C157, H162, and C167. Residues 172 to 252 (VPQHPTTSQG…KGPSVQKKKK (81 aa)) are disordered. The span at 213-222 (GRSELSERSS) shows a compositional bias: basic and acidic residues. A compositionally biased stretch (polar residues) spans 225–238 (PQEASLSKISTSPE).

It belongs to the lin-28 family.

It localises to the nucleus. The protein localises to the nucleolus. Functionally, suppressor of specific microRNA (miRNA) biogenesis. Binds target primary miRNA transcripts and sequester them in the nucleolus, away from the microprocessor complex, hence preventing their processing into mature miRNA. The specific interaction with target pri-miRNAs occurs via an 5'-GGAG-3' motif in the pre-miRNA terminal loop. This is Protein lin-28 homolog B (lin28b) from Xenopus laevis (African clawed frog).